The primary structure comprises 515 residues: Maturase K (515 aa).

The protein belongs to the intron maturase 2 family. MatK subfamily.

The protein localises to the plastid. The protein resides in the chloroplast. Its function is as follows. Usually encoded in the trnK tRNA gene intron. Probably assists in splicing its own and other chloroplast group II introns. The sequence is that of Maturase K from Pinus attenuata (Knobcone pine).